The following is a 447-amino-acid chain: Glutamate--tRNA ligase 1 (447 aa).

A 'HIGH' region motif is present at residues 10–20; that stretch reads PSPTGMLHVGN. The 'KMSKS' region motif lies at 240–244; the sequence is KISKR. Lysine 243 contacts ATP.

It belongs to the class-I aminoacyl-tRNA synthetase family. Glutamate--tRNA ligase type 1 subfamily. As to quaternary structure, monomer.

The protein localises to the cytoplasm. The catalysed reaction is tRNA(Glu) + L-glutamate + ATP = L-glutamyl-tRNA(Glu) + AMP + diphosphate. In terms of biological role, catalyzes the attachment of glutamate to tRNA(Glu) in a two-step reaction: glutamate is first activated by ATP to form Glu-AMP and then transferred to the acceptor end of tRNA(Glu). This Rickettsia akari (strain Hartford) protein is Glutamate--tRNA ligase 1.